The sequence spans 1543 residues: Rho guanine nucleotide exchange factor 12 (1543 aa).

Positions 1-62 are disordered; the sequence is MSGTQSTITD…KTKSSSEESR (62 aa). Position 2 is an N-acetylserine (Ser-2). Over residues 28–45 the composition is skewed to basic and acidic residues; that stretch reads SPTDKKQKVERSSSHDFD. A Phosphoserine modification is found at Ser-41. One can recognise a PDZ domain in the interval 72–151; the sequence is CVIIQKDDNG…LTVQGRPPGS (80 aa). Positions 194-262 form a coiled coil; that stretch reads VGEENNVVHN…LSKATGSAQD (69 aa). Residues 281-355 are disordered; it reads AEADPGDGLC…GAPHIIGAED (75 aa). The span at 293–312 shows a compositional bias: low complexity; that stretch reads DWSSGDASRPSSDSADSPKS. The residue at position 309 (Ser-309) is a Phosphoserine. A compositionally biased stretch (basic and acidic residues) spans 313-329; that stretch reads SLRERSYLEEAPERSEG. Residue Ser-341 is modified to Phosphoserine. The region spanning 367 to 558 is the RGSL domain; sequence GQCSCFQSIE…LMYMKYLGVK (192 aa). The interval 574–710 is disordered; the sequence is FLPKIKQSMK…DSTPRVPTTV (137 aa). Positions 582-592 are enriched in basic and acidic residues; that stretch reads MKKDREGEEKG. The residue at position 637 (Ser-637) is a Phosphoserine. Low complexity predominate over residues 663 to 676; it reads ASSMSSATSGTALS. Phosphothreonine is present on Thr-736. One can recognise a DH domain in the interval 787 to 977; the sequence is KRQEVINELF…RQILNYVNQA (191 aa). The stretch at 981-1004 forms a coiled coil; the sequence is AENKQRLEDYQRRLDTSNLKLSEY. Positions 1019-1132 constitute a PH domain; the sequence is KMIHEGPLVW…WQDLICRMAA (114 aa). The segment at 1137–1158 is disordered; that stretch reads QSTKPIPLPQPPPCEGDNDEEE. A phosphoserine mark is found at Ser-1288, Ser-1327, and Ser-1377. Disordered regions lie at residues 1386–1405 and 1441–1468; these read EAHS…KEEK and PVTG…GPVS. Polar residues predominate over residues 1450–1460; sequence SSHQQQHSPQN. 2 positions are modified to phosphoserine: Ser-1457 and Ser-1540.

In terms of assembly, interacts with GNA12 and GNA13, probably through the RGS-like domain, with RHOA, PLXNB1 and PLXNB2, and through its PDZ domain with IGF1R beta subunit. Interacts with GCSAM. Found in a complex with ARHGEF11 and ARHGEF12; binding to ARHGEF11 and ARHGEF12 enhances CDC42 GEF activity of PLEKHG4B, and PLEKHG4B, in turn, inhibits ARHGEF11- and ARHGEF12-mediated RHOA activation. As to expression, expressed in brain, predominantly in neuronal cell bodies.

The protein localises to the cytoplasm. It is found in the membrane. May play a role in the regulation of RhoA GTPase by guanine nucleotide-binding alpha-12 (GNA12) and alpha-13 (GNA13). Acts as guanine nucleotide exchange factor (GEF) for RhoA GTPase and may act as GTPase-activating protein (GAP) for GNA12 and GNA13. This chain is Rho guanine nucleotide exchange factor 12 (Arhgef12), found in Mus musculus (Mouse).